An 857-amino-acid polypeptide reads, in one-letter code: MAKKDTTPMMKQYYEIKEQYPDAFLFYRVGDFYELFEDDAVKGAQILELTLTHRSNKTKNPIPMAGVPHLAVDTYVNTLVEKGYKVALCEQLEDPKKAKGMVKRGIIQLITPGTMMHERPDQAKDSNYLTSVISTNSGFGLAYSDLSTGETFSTHLTDFEGVANELLSLQTREVVYNGHLTEANKDFLKKANITVSEPVKVEGEHAEISYVTQNLTDDAEIKATKQLVAYLLSTQKRSLAHLQVAQSYEPTQYLQMSHTVQTNLELIKSAKTSKKMGSLFWLLDKTSTAMGGRLLKSWIERPLLSVTEITRRQEMVQALLDDYFTREKVIDSLKGVYDLERLTGRIAFGSVNAREMLQLAHSLGAIPDILNSLLETNNPHLQNFAKQIDPLKGIHDLIVNTIVDNPPLLTTEGGLIREGVSDQLDRYRDAMNNGKKWLSEMESHEREVTGINNLKVGYNKVFGYYIEVTNSNKDKVPTDRYTRKQTLTNAERYITPDLKEHESLILEAEAKSTGLEYDLFVKLRENVKKYIPALQKLAKQVASLDVLTNFATVSEQNNYVRPDFTVDKQEINVVNGRHPVVEQVMTAGSYIPNDVKMDQDTDIFLITGPNMSGKSTYMRQMALIAIMAQIGCFVPADSATLPIFDQIFTRIGAADDLISGQSTFMVEMSEANDALQHATKRSLVLFDEIGRGTATYDGMALAGAIVKYLHDKVGAKTLFATHYHELTDLDQTLKHLKNIHVGATEENGKLIFLHKILPGPADQSYGIHVAQLAGLPHKVLREATTMLKRLEKQGAGELQPASEQLDLFTAEEASVPAISDDEKDVLDDIQNVYLADKTPLQVMELVAQWQQELKDKD.

Position 608–615 (608–615 (GPNMSGKS)) interacts with ATP.

Belongs to the DNA mismatch repair MutS family.

Its function is as follows. This protein is involved in the repair of mismatches in DNA. It is possible that it carries out the mismatch recognition step. This protein has a weak ATPase activity. In Lactobacillus gasseri (strain ATCC 33323 / DSM 20243 / BCRC 14619 / CIP 102991 / JCM 1131 / KCTC 3163 / NCIMB 11718 / NCTC 13722 / AM63), this protein is DNA mismatch repair protein MutS.